A 140-amino-acid chain; its full sequence is Small ribosomal subunit protein uS12 (140 aa).

D102 is subject to 3-methylthioaspartic acid.

The protein belongs to the universal ribosomal protein uS12 family. Part of the 30S ribosomal subunit. Contacts proteins S8 and S17. May interact with IF1 in the 30S initiation complex.

In terms of biological role, with S4 and S5 plays an important role in translational accuracy. Its function is as follows. Interacts with and stabilizes bases of the 16S rRNA that are involved in tRNA selection in the A site and with the mRNA backbone. Located at the interface of the 30S and 50S subunits, it traverses the body of the 30S subunit contacting proteins on the other side and probably holding the rRNA structure together. The combined cluster of proteins S8, S12 and S17 appears to hold together the shoulder and platform of the 30S subunit. This is Small ribosomal subunit protein uS12 from Geobacillus sp. (strain WCH70).